The primary structure comprises 395 residues: DNA primase small subunit PriS (395 aa).

Active-site residues include Asp95, Asp97, and Asp302.

Belongs to the eukaryotic-type primase small subunit family. As to quaternary structure, heterodimer of a small subunit (PriS) and a large subunit (PriL). It depends on Mg(2+) as a cofactor. Mn(2+) is required as a cofactor.

In terms of biological role, catalytic subunit of DNA primase, an RNA polymerase that catalyzes the synthesis of short RNA molecules used as primers for DNA polymerase during DNA replication. The small subunit contains the primase catalytic core and has DNA synthesis activity on its own. Binding to the large subunit stabilizes and modulates the activity, increasing the rate of DNA synthesis while decreasing the length of the DNA fragments, and conferring RNA synthesis capability. The DNA polymerase activity may enable DNA primase to also catalyze primer extension after primer synthesis. May also play a role in DNA repair. The chain is DNA primase small subunit PriS from Methanothrix thermoacetophila (strain DSM 6194 / JCM 14653 / NBRC 101360 / PT) (Methanosaeta thermophila).